We begin with the raw amino-acid sequence, 317 residues long: Putative 2-hydroxyacid dehydrogenase SAR2389 (317 aa).

Residues 155–156 (EI), 234–236 (ASR), and Asp260 each bind NAD(+). Residue Arg236 is part of the active site. Glu265 is an active-site residue. His283 acts as the Proton donor in catalysis. 283-286 (HIGN) contributes to the NAD(+) binding site.

It belongs to the D-isomer specific 2-hydroxyacid dehydrogenase family.

The sequence is that of Putative 2-hydroxyacid dehydrogenase SAR2389 from Staphylococcus aureus (strain MRSA252).